An 827-amino-acid chain; its full sequence is ADP-ribosylation factor GTPase-activating protein AGD3 (827 aa).

Residues 1–225 (MHFTKLDDSP…INQVLTYAQQ (225 aa)) enclose the BAR domain. 2 coiled-coil regions span residues 116–139 (HEVK…REKF) and 223–253 (AQQS…RESR). The interval 246-269 (RQVDRESRWGSNGSNGSPNGDGIQ) is disordered. Low complexity predominate over residues 255–267 (GSNGSNGSPNGDG). Residues 292 to 430 (QTIRQGYLSK…WIEKITGVIA (139 aa)) form the PH domain. Residues 439 to 467 (EQRLPGSPMGSGHHRSASESSSYESSEYD) are disordered. S445 carries the post-translational modification Phosphoserine. The Arf-GAP domain occupies 501 to 643 (EKPIDALRKV…LFVRRSRDSD (143 aa)). The C4-type zinc finger occupies 516–539 (CADCGAPEPDWASLNLGVLVCIEC). 3 ANK repeats span residues 728-757 (GGSS…NVNA), 761-790 (SGQT…DPEA), and 794-825 (EGKT…YNHR).

In terms of assembly, homodimer. Interacts with DRP1A. Interacts with VAB. Broadly expressed. Detected in developing veins of the leaf and root. Detected in roots, hypocotyls, cotyledons, leaves, siliques and shoot apical meristems.

It is found in the golgi apparatus. Its subcellular location is the trans-Golgi network. ARF GAP activity strongly enhanced by phosphatidylinositol 4-monophosphate (PIP) and moderately enhanced by phosphatidylinositol 4,5-bisphosphate (PIP2). GTPase-activating protein (GAP) for ADP ribosylation factor (ARF). Involved in the spatial control of provascular differentiation. Required for the formation of the normal pattern of continuous secondary veins. Involved in auxin signaling but not in polar auxin transport or in auxin responses. Required for PIN1 internalization in roots. The sequence is that of ADP-ribosylation factor GTPase-activating protein AGD3 (AGD3) from Arabidopsis thaliana (Mouse-ear cress).